Consider the following 522-residue polypeptide: Polyprenol-phosphate-mannose--protein mannosyltransferase (522 aa).

Topologically, residues 1-42 are cytoplasmic; sequence MTARPPESCVLAKDRPEEPVVPVVSPGPLVPVADFGPLDRLR. The helical transmembrane segment at 43 to 63 threads the bilayer; sequence GWIVTGLITLLATVTRFLNLG. Residues 64–119 are Extracellular-facing; the sequence is SLTDAGTPIFDEKHYAPQAWQVLNNHGVEDNPGYGLVVHPPVGKQLIAIGEAIFGY. A helical transmembrane segment spans residues 120-140; the sequence is NGFGWRFTGALLGVVLVALVV. At 141–149 the chain is on the cytoplasmic side; that stretch reads RIVRRISRS. A helical membrane pass occupies residues 150-170; the sequence is TLVGAIAGVLLICDGVSFVTA. A topological domain (extracellular) is located at residue arginine 171. Residues 172–192 traverse the membrane as a helical segment; it reads TALLDGFLTFFVVAAFGALIV. The Cytoplasmic segment spans residues 193 to 239; sequence DRDQVRERMHIALLAGRSAATVWGPRVGVRWWRFGAGVLLGLACATK. The helical transmembrane segment at 240-260 threads the bilayer; it reads WSGVYFVLFFGAMALAFDVAA. The Extracellular segment spans residues 261–281; it reads RRQYQVQRPWLGTVRRDVLPS. The chain crosses the membrane as a helical span at residues 282 to 302; that stretch reads GYALGLIPFAVYLATYAPWFA. At 303 to 390 the chain is on the cytoplasmic side; the sequence is SETAIDRHAV…CGAQSCVKAE (88 aa). Residues 391-411 form a helical membrane-spanning segment; the sequence is MLVGTPAMWWLAVPVLAYAGW. Residues 412–418 lie on the Extracellular side of the membrane; sequence RMFVRRD. Residues 419–439 traverse the membrane as a helical segment; the sequence is WRYAVVLVGYCAGWLPWFADI. The Cytoplasmic portion of the chain corresponds to 440 to 442; the sequence is DRQ. The helical transmembrane segment at 443 to 463 threads the bilayer; the sequence is MYFFYAATMAPFLVMGISLVL. Over 464–478 the chain is Extracellular; the sequence is GDILYHPGQGSERRT. Residues 479–499 form a helical membrane-spanning segment; sequence LGLIVVCCYVALVVTNFAWLY. The Cytoplasmic portion of the chain corresponds to 500–522; sequence PVLTGLPISQQTWNLEIWLPSWR.

The protein belongs to the glycosyltransferase 39 family.

It localises to the cell membrane. It functions in the pathway protein modification; protein glycosylation. In terms of biological role, protein O-mannosyltransferase that catalyzes the transfer of a single mannose residue from a polyprenol phospho-mannosyl lipidic donor to the hydroxyl group of selected serine and threonine residues in acceptor proteins. In Mycobacterium tuberculosis (strain CDC 1551 / Oshkosh), this protein is Polyprenol-phosphate-mannose--protein mannosyltransferase (pmt).